A 313-amino-acid chain; its full sequence is tRNA dimethylallyltransferase (313 aa).

Residue 11–18 (GPTAGGKT) coordinates ATP. 13–18 (TAGGKT) lines the substrate pocket. 3 interaction with substrate tRNA regions span residues 36 to 39 (DSAL), 160 to 164 (QRIGR), and 243 to 248 (RCVGYR).

Belongs to the IPP transferase family. In terms of assembly, monomer. The cofactor is Mg(2+).

The catalysed reaction is adenosine(37) in tRNA + dimethylallyl diphosphate = N(6)-dimethylallyladenosine(37) in tRNA + diphosphate. Its function is as follows. Catalyzes the transfer of a dimethylallyl group onto the adenine at position 37 in tRNAs that read codons beginning with uridine, leading to the formation of N6-(dimethylallyl)adenosine (i(6)A). The protein is tRNA dimethylallyltransferase of Neisseria meningitidis serogroup C / serotype 2a (strain ATCC 700532 / DSM 15464 / FAM18).